A 341-amino-acid polypeptide reads, in one-letter code: Phosphate acyltransferase (341 aa).

This sequence belongs to the PlsX family. As to quaternary structure, homodimer. Probably interacts with PlsY.

The protein resides in the cytoplasm. It carries out the reaction a fatty acyl-[ACP] + phosphate = an acyl phosphate + holo-[ACP]. It functions in the pathway lipid metabolism; phospholipid metabolism. Its function is as follows. Catalyzes the reversible formation of acyl-phosphate (acyl-PO(4)) from acyl-[acyl-carrier-protein] (acyl-ACP). This enzyme utilizes acyl-ACP as fatty acyl donor, but not acyl-CoA. This chain is Phosphate acyltransferase, found in Ehrlichia ruminantium (strain Gardel).